The following is a 575-amino-acid chain: SH2B adapter protein 3 (575 aa).

Disordered stretches follow at residues 1 to 23 (MNGP…AAAP), 83 to 136 (RAPG…CSFQ), and 150 to 176 (SAGE…PARP). Residue Ser13 is modified to Phosphoserine. A compositionally biased stretch (basic and acidic residues) spans 83 to 93 (RAPGRDYRDTG). Low complexity predominate over residues 95 to 104 (GPPAKAEASP). Ser103, Ser120, and Ser150 each carry phosphoserine. The segment covering 152–174 (GELPAAHTAAAPGTPGEAAETPA) has biased composition (low complexity). The region spanning 194 to 307 (EALKEAVLRY…WMAELSECTG (114 aa)) is the PH domain. The interval 322-346 (ALEPSTSSSPRGSTDSLNQGASPGG) is disordered. Residues 325 to 337 (PSTSSSPRGSTDS) are compositionally biased toward low complexity. Ser330 bears the Phosphoserine mark. An SH2 domain is found at 364–462 (WFHGPISRVK…ACDVRLSSYV (99 aa)). Disordered regions lie at residues 503 to 525 (SSGC…PEQI) and 546 to 575 (PVNR…YTPL).

The protein belongs to the SH2B adapter family. As to quaternary structure, binds to the tyrosine-phosphorylated TCR zeta chain via its SH2 domain. In terms of processing, tyrosine phosphorylated by LCK. In terms of tissue distribution, preferentially expressed by lymphoid cell lines.

In terms of biological role, links T-cell receptor activation signal to phospholipase C-gamma-1, GRB2 and phosphatidylinositol 3-kinase. This chain is SH2B adapter protein 3 (SH2B3), found in Homo sapiens (Human).